A 302-amino-acid chain; its full sequence is Putative fructose-bisphosphate aldolase (302 aa).

Aspartate 86 serves as the catalytic Proton donor. Zn(2+) is bound by residues histidine 87, aspartate 116, glutamate 146, and histidine 192. Dihydroxyacetone phosphate is bound at residue glycine 193. Histidine 223 is a Zn(2+) binding site. Dihydroxyacetone phosphate-binding positions include 224–226 and 245–248; these read GAD and NVNR.

The protein belongs to the class II fructose-bisphosphate aldolase family. As to quaternary structure, homodimer. The cofactor is Zn(2+).

It carries out the reaction beta-D-fructose 1,6-bisphosphate = D-glyceraldehyde 3-phosphate + dihydroxyacetone phosphate. It participates in carbohydrate degradation; glycolysis; D-glyceraldehyde 3-phosphate and glycerone phosphate from D-glucose: step 4/4. Catalyzes the aldol condensation of dihydroxyacetone phosphate (DHAP or glycerone-phosphate) with glyceraldehyde 3-phosphate (G3P) to form fructose 1,6-bisphosphate (FBP) in gluconeogenesis and the reverse reaction in glycolysis. The chain is Putative fructose-bisphosphate aldolase from Coccidioides immitis (strain RS) (Valley fever fungus).